Consider the following 291-residue polypeptide: Nucleotide-binding protein Lm4b_02443 (291 aa).

13–20 provides a ligand contact to ATP; that stretch reads GMSGAGKT. Position 63–66 (63–66) interacts with GTP; the sequence is DLRG.

It belongs to the RapZ-like family.

Functionally, displays ATPase and GTPase activities. The protein is Nucleotide-binding protein Lm4b_02443 of Listeria monocytogenes serotype 4b (strain CLIP80459).